The following is a 138-amino-acid chain: ATP synthase epsilon chain (138 aa).

This sequence belongs to the ATPase epsilon chain family. As to quaternary structure, F-type ATPases have 2 components, CF(1) - the catalytic core - and CF(0) - the membrane proton channel. CF(1) has five subunits: alpha(3), beta(3), gamma(1), delta(1), epsilon(1). CF(0) has three main subunits: a, b and c.

It localises to the cell inner membrane. Functionally, produces ATP from ADP in the presence of a proton gradient across the membrane. The sequence is that of ATP synthase epsilon chain from Bartonella quintana (strain Toulouse) (Rochalimaea quintana).